A 332-amino-acid polypeptide reads, in one-letter code: MDPRSEVLLRQAELFQGPLLIAGAPADDLLGQLPQAQAWTWHAGDQAMLESRFAGRSHYGVEAPEAAFESAVLFLPKSRELAAYLLNTLASRLAGRELYLVGEKRGGIEGAAKQLAAFGKPRKLDSARHCQLWQVTIDQAPQAKPLESLAERFELALEDGPLQVVSLPGVFSHGRLDRGTALLLKHLDGLPGGHMLDFGCGAGVLGATLKRRYPQSRVTLLDVDAFAVAASRLTLAANGLEGEVISGDGIDAAPTELSLILSNPPFHTGVHTNYQASENLLKKSAVHLRKGGEMRLVANSFLRYQPLIEGALGNCQVRDEADGFRIYQATRG.

This sequence belongs to the methyltransferase superfamily. RsmC family. Monomer.

The protein resides in the cytoplasm. It carries out the reaction guanosine(1207) in 16S rRNA + S-adenosyl-L-methionine = N(2)-methylguanosine(1207) in 16S rRNA + S-adenosyl-L-homocysteine + H(+). In terms of biological role, specifically methylates the guanine in position 1207 of 16S rRNA in the 30S particle. The protein is Ribosomal RNA small subunit methyltransferase C of Pseudomonas putida (strain ATCC 700007 / DSM 6899 / JCM 31910 / BCRC 17059 / LMG 24140 / F1).